The chain runs to 501 residues: Spore development regulator VOSA (501 aa).

Disordered regions lie at residues 26–55, 67–88, and 228–274; these read GQFGDPNLTPPQAETQMSAQASAQAVGQEP, PQRARVAQGKEKGTDRKPIDPP, and AMTT…DTRG. Positions 35–50 are enriched in polar residues; it reads PPQAETQMSAQASAQA. A Velvet domain is found at 52–223; it reads GQEPEPDYKL…SDQGVRLRVR (172 aa). Basic and acidic residues-rich tracts occupy residues 67-85 and 237-252; these read PQRARVAQGKEKGTDRKPI and QHAEVAKKHSEWDRKQ. Over residues 253–271 the composition is skewed to polar residues; the sequence is TSAVSRHSSINENDSTPTD. A Nuclear localization signal motif is present at residues 364–371; the sequence is MSSHHGYT. Disordered stretches follow at residues 378–455 and 474–501; these read FAPH…QQTP and PGQLVGTSAPSPHLGQGYRHGMINEPGA.

The protein belongs to the velvet family. VosA subfamily. As to quaternary structure, forms a heterodimeric complex with VELB; the formation of the VELB-VOSA complex is light-dependent.

It is found in the nucleus. Its function is as follows. Component of the VELB-VOSA heterodimeric complex that plays a dual role in activating genes associated with spore maturation and repressing certain development-associated genes. The complex binds DNA through the DNA-binding domain of VOSA that recognizes an 11-nucleotide consensus sequence 5'-CTGGCCGCGGC-3' consisting of two motifs in the promoters of key developmental regulatory genes. Appears dispensable for the development and pathogenicity. This is Spore development regulator VOSA from Pyricularia oryzae (strain 70-15 / ATCC MYA-4617 / FGSC 8958) (Rice blast fungus).